A 285-amino-acid polypeptide reads, in one-letter code: Acetylglutamate kinase (285 aa).

Substrate-binding positions include 63-64, arginine 85, and asparagine 178; that span reads GG.

Belongs to the acetylglutamate kinase family. ArgB subfamily.

The protein resides in the cytoplasm. It carries out the reaction N-acetyl-L-glutamate + ATP = N-acetyl-L-glutamyl 5-phosphate + ADP. The protein operates within amino-acid biosynthesis; L-arginine biosynthesis; N(2)-acetyl-L-ornithine from L-glutamate: step 2/4. Its function is as follows. Catalyzes the ATP-dependent phosphorylation of N-acetyl-L-glutamate. This chain is Acetylglutamate kinase, found in Synechococcus sp. (strain CC9311).